The following is a 474-amino-acid chain: 3-isopropylmalate dehydratase large subunit (474 aa).

The [4Fe-4S] cluster site is built by cysteine 352, cysteine 413, and cysteine 416.

It belongs to the aconitase/IPM isomerase family. LeuC type 1 subfamily. As to quaternary structure, heterodimer of LeuC and LeuD. It depends on [4Fe-4S] cluster as a cofactor.

It catalyses the reaction (2R,3S)-3-isopropylmalate = (2S)-2-isopropylmalate. Its pathway is amino-acid biosynthesis; L-leucine biosynthesis; L-leucine from 3-methyl-2-oxobutanoate: step 2/4. Catalyzes the isomerization between 2-isopropylmalate and 3-isopropylmalate, via the formation of 2-isopropylmaleate. The sequence is that of 3-isopropylmalate dehydratase large subunit from Pseudomonas syringae pv. syringae (strain B728a).